The sequence spans 2226 residues: Rotatin (2226 aa).

A disordered region spans residues 295-345 (ARGTHHSQNPSPGSSSPRPSVVGRTGQRPRGDGQDWDAASSSGSSSHAHVN). Low complexity-rich tracts occupy residues 304–318 (PSPG…VVGR) and 332–343 (AASSSGSSSHAH). Ser-310 carries the phosphoserine modification. Lys-811 carries the post-translational modification N6-acetyllysine. The interval 1534 to 1554 (SRTSQDRDPSSLSTSETTVAP) is disordered. Positions 1543–1554 (SSLSTSETTVAP) are enriched in polar residues.

This sequence belongs to the rotatin family. As to quaternary structure, interacts with PPP1R35; this interaction allows the mutual recruitment to the centriole.

It localises to the cytoplasm. It is found in the cytoskeleton. The protein resides in the cilium basal body. Its subcellular location is the microtubule organizing center. The protein localises to the centrosome. Involved in the genetic cascade that governs left-right specification. Plays a role in the maintenance of a normal ciliary structure. Required for correct asymmetric expression of NODAL, LEFTY and PITX2. This Homo sapiens (Human) protein is Rotatin.